The following is a 183-amino-acid chain: Adenine phosphoribosyltransferase (183 aa).

Belongs to the purine/pyrimidine phosphoribosyltransferase family. As to quaternary structure, homodimer.

It localises to the cytoplasm. It carries out the reaction AMP + diphosphate = 5-phospho-alpha-D-ribose 1-diphosphate + adenine. It participates in purine metabolism; AMP biosynthesis via salvage pathway; AMP from adenine: step 1/1. Functionally, catalyzes a salvage reaction resulting in the formation of AMP, that is energically less costly than de novo synthesis. The polypeptide is Adenine phosphoribosyltransferase (Klebsiella pneumoniae subsp. pneumoniae (strain ATCC 700721 / MGH 78578)).